A 155-amino-acid polypeptide reads, in one-letter code: Peptide methionine sulfoxide reductase MsrB (155 aa).

A MsrB domain is found at 15-137; the sequence is REALIATLNA…NSVSLTFIPT (123 aa). Zn(2+)-binding residues include Cys-54, Cys-57, Cys-103, and Cys-106. Cys-126 acts as the Nucleophile in catalysis.

This sequence belongs to the MsrB Met sulfoxide reductase family. Zn(2+) is required as a cofactor.

The enzyme catalyses L-methionyl-[protein] + [thioredoxin]-disulfide + H2O = L-methionyl-(R)-S-oxide-[protein] + [thioredoxin]-dithiol. The polypeptide is Peptide methionine sulfoxide reductase MsrB (Xylella fastidiosa (strain M23)).